The following is a 156-amino-acid chain: MAATLTPEQITEYKGIFEMFDEEGNGLVKTDDLESLMSLIGINPTKRDLANMAKDVDKDKKGTFNCEGFLVLMGIYHEKSKNQDEELRAAFKVFDKEHKGYIEWDTLKYVLMNAGEPLNEHEAELMMKEADKDGDGTIDYEEFVAMMTGESFKLTQ.

4 EF-hand domains span residues 8-43, 44-79, 82-117, and 118-153; these read EQIT…IGIN, PTKR…YHEK, NQDE…AGEP, and LNEH…ESFK. Ca(2+) contacts are provided by Asp131, Asp133, Asp135, Thr137, and Glu142.

The protein belongs to the calmodulin family. Calglandulin subfamily. As to expression, expressed by the venom gland.

It localises to the cytoplasm. May be involved in the cellular control mechanism of the secretion of toxins from the gland into the venom. This is Calglandulin from Tropidechis carinatus (Australian rough-scaled snake).